The sequence spans 204 residues: MSKIHVLNDKFENSGELELPASYAEVNPHNLYLYVKSYLAGIRANSAHTKSRAFVSGGGKKPWRQKGRGGARAGSTRTNVWVGGAVAFGPTNEKNYFQKVNKKQKRLALEYALAVKAQDGKIFAVDSISIESGKTKDAANIIKNLKVKDALIVKDLLDDKTLLAFRNLANCYVVDANEVNAYLVSTFSSVIIEKAALKTITKEG.

A disordered region spans residues 53 to 73 (AFVSGGGKKPWRQKGRGGARA).

Belongs to the universal ribosomal protein uL4 family. In terms of assembly, part of the 50S ribosomal subunit.

Functionally, one of the primary rRNA binding proteins, this protein initially binds near the 5'-end of the 23S rRNA. It is important during the early stages of 50S assembly. It makes multiple contacts with different domains of the 23S rRNA in the assembled 50S subunit and ribosome. Its function is as follows. Forms part of the polypeptide exit tunnel. The chain is Large ribosomal subunit protein uL4 from Campylobacter concisus (strain 13826).